Consider the following 206-residue polypeptide: Guanylate kinase (206 aa).

In terms of domain architecture, Guanylate kinase-like spans 5-183 (FNLLILSGPS…SKEIILSIAK (179 aa)). 12–19 (GPSGAGKS) contacts ATP.

This sequence belongs to the guanylate kinase family.

It localises to the cytoplasm. It catalyses the reaction GMP + ATP = GDP + ADP. Essential for recycling GMP and indirectly, cGMP. This Helicobacter pylori (strain ATCC 700392 / 26695) (Campylobacter pylori) protein is Guanylate kinase (gmk).